A 370-amino-acid polypeptide reads, in one-letter code: tRNA/tmRNA (uracil-C(5))-methyltransferase (370 aa).

S-adenosyl-L-methionine is bound by residues Gln-195, Tyr-221, Asn-226, Glu-242, and Asp-302. Cys-327 acts as the Nucleophile in catalysis. The active-site Proton acceptor is the Glu-361.

This sequence belongs to the class I-like SAM-binding methyltransferase superfamily. RNA M5U methyltransferase family. TrmA subfamily.

It catalyses the reaction uridine(54) in tRNA + S-adenosyl-L-methionine = 5-methyluridine(54) in tRNA + S-adenosyl-L-homocysteine + H(+). The enzyme catalyses uridine(341) in tmRNA + S-adenosyl-L-methionine = 5-methyluridine(341) in tmRNA + S-adenosyl-L-homocysteine + H(+). Its function is as follows. Dual-specificity methyltransferase that catalyzes the formation of 5-methyluridine at position 54 (m5U54) in all tRNAs, and that of position 341 (m5U341) in tmRNA (transfer-mRNA). This chain is tRNA/tmRNA (uracil-C(5))-methyltransferase, found in Wolinella succinogenes (strain ATCC 29543 / DSM 1740 / CCUG 13145 / JCM 31913 / LMG 7466 / NCTC 11488 / FDC 602W) (Vibrio succinogenes).